The sequence spans 418 residues: Lariat debranching enzyme (418 aa).

Residues C8, H10, D39, and N84 each coordinate a divalent metal cation. Residues 124 to 154 are lariat recognition loop; sequence SGIYNERHYRSGHFERPPYNESTIRSVYHVR. A divalent metal cation is bound by residues H174, H226, and H228. Residues 372 to 418 are disordered; that stretch reads GERTDIPASLAPSDLPTYDSEEIPIDDIDEIEEMEEAKADDHTRDDA. Residues 390–406 are compositionally biased toward acidic residues; sequence DSEEIPIDDIDEIEEME. The span at 407–418 shows a compositional bias: basic and acidic residues; sequence EAKADDHTRDDA.

It belongs to the lariat debranching enzyme family. Fe(2+) serves as cofactor. It depends on Zn(2+) as a cofactor. Mn(2+) is required as a cofactor. In terms of tissue distribution, widely expressed. Expressed in roots, stems, cauline and rosette leaves, flower buds and siliques.

Its subcellular location is the nucleus. With respect to regulation, active in presence of diverse metals including Fe(2+), Zn(2+), Mn(2+). Binds two metal cations in two adjacent alpha and beta metal-binding pockets. Cleaves the 2'-5' phosphodiester linkage at the branch point of lariat intron pre-mRNAs after splicing and converts them into linear molecules that are subsequently degraded. It thereby facilitates ribonucleotide turnover. It may also participate in retrovirus replication via an RNA lariat intermediate in cDNA synthesis. Plays en essential role during embryogenesis. This is Lariat debranching enzyme (DBR1) from Arabidopsis thaliana (Mouse-ear cress).